The chain runs to 126 residues: uncharacterized protein (126 aa).

The next 2 membrane-spanning stretches (helical) occupy residues 21-43 (LIVWNIFVNLRLGVFLLLVRIFS) and 48-70 (SVTFLGLFRTLLPVGRICFLLLL).

It is found in the membrane. This is an uncharacterized protein from Saccharomyces cerevisiae (strain ATCC 204508 / S288c) (Baker's yeast).